The primary structure comprises 147 residues: Myosin-2 essential light chain (147 aa).

3 consecutive EF-hand domains span residues 7 to 42 (DQLA…LGQN), 80 to 115 (DTAD…LGEK), and 115 to 147 (KLTD…VMSG). Position 30 is a phosphoserine (serine 30). Ca(2+)-binding residues include aspartate 93, aspartate 95, serine 97, tyrosine 99, and glutamate 104.

Myosin is a hexamer of 2 heavy chains and 4 light chains.

The chain is Myosin-2 essential light chain (Mlc-c) from Drosophila melanogaster (Fruit fly).